A 135-amino-acid polypeptide reads, in one-letter code: Hydroxylaminobenzene mutase HabA (135 aa).

The next 4 membrane-spanning stretches (helical) occupy residues L5–V25, V33–Y55, F67–W87, and F113–I133.

Its subcellular location is the cell membrane. It catalyses the reaction N-phenylhydroxylamine = 2-aminophenol. In terms of biological role, catalyzes the rearrangement of hydroxylaminobenzene to 2-aminophenol. Involved in the degradation of nitrobenzene. The sequence is that of Hydroxylaminobenzene mutase HabA (habA) from Ectopseudomonas oleovorans (Pseudomonas oleovorans).